An 833-amino-acid polypeptide reads, in one-letter code: DNA polymerase I, thermostable (833 aa).

One can recognise a 5'-3' exonuclease domain in the interval valine 173 to aspartate 267. The tract at residues glutamate 412–aspartate 833 is polymerase.

The protein belongs to the DNA polymerase type-A family.

It carries out the reaction DNA(n) + a 2'-deoxyribonucleoside 5'-triphosphate = DNA(n+1) + diphosphate. Its function is as follows. In addition to polymerase activity, this DNA polymerase exhibits 5'-3' exonuclease activity. Unlikely to have 3'-5' exonuclease activity due to absence of a 3'-5' exonuclease domain. This chain is DNA polymerase I, thermostable (polA), found in Thermus filiformis.